Consider the following 499-residue polypeptide: Aspartyl/glutamyl-tRNA(Asn/Gln) amidotransferase subunit B (499 aa).

It belongs to the GatB/GatE family. GatB subfamily. As to quaternary structure, heterotrimer of A, B and C subunits.

The enzyme catalyses L-glutamyl-tRNA(Gln) + L-glutamine + ATP + H2O = L-glutaminyl-tRNA(Gln) + L-glutamate + ADP + phosphate + H(+). It carries out the reaction L-aspartyl-tRNA(Asn) + L-glutamine + ATP + H2O = L-asparaginyl-tRNA(Asn) + L-glutamate + ADP + phosphate + 2 H(+). Allows the formation of correctly charged Asn-tRNA(Asn) or Gln-tRNA(Gln) through the transamidation of misacylated Asp-tRNA(Asn) or Glu-tRNA(Gln) in organisms which lack either or both of asparaginyl-tRNA or glutaminyl-tRNA synthetases. The reaction takes place in the presence of glutamine and ATP through an activated phospho-Asp-tRNA(Asn) or phospho-Glu-tRNA(Gln). The polypeptide is Aspartyl/glutamyl-tRNA(Asn/Gln) amidotransferase subunit B (Bartonella bacilliformis (strain ATCC 35685 / KC583 / Herrer 020/F12,63)).